The following is a 274-amino-acid chain: Diaminopimelate epimerase (274 aa).

Substrate is bound by residues Asn-11, Gln-44, and Asn-64. The active-site Proton donor is Cys-73. Substrate contacts are provided by residues 74–75, Asn-157, Asn-190, and 208–209; these read GN and ER. Residue Cys-217 is the Proton acceptor of the active site. A substrate-binding site is contributed by 218 to 219; sequence GS.

The protein belongs to the diaminopimelate epimerase family. Homodimer.

Its subcellular location is the cytoplasm. The catalysed reaction is (2S,6S)-2,6-diaminopimelate = meso-2,6-diaminopimelate. Its pathway is amino-acid biosynthesis; L-lysine biosynthesis via DAP pathway; DL-2,6-diaminopimelate from LL-2,6-diaminopimelate: step 1/1. Functionally, catalyzes the stereoinversion of LL-2,6-diaminopimelate (L,L-DAP) to meso-diaminopimelate (meso-DAP), a precursor of L-lysine and an essential component of the bacterial peptidoglycan. The sequence is that of Diaminopimelate epimerase from Edwardsiella ictaluri (strain 93-146).